The following is a 327-amino-acid chain: Replication factor C small subunit (327 aa).

47–54 lines the ATP pocket; it reads GPPGTGKT.

The protein belongs to the activator 1 small subunits family. RfcS subfamily. Heteromultimer composed of small subunits (RfcS) and large subunits (RfcL).

Its function is as follows. Part of the RFC clamp loader complex which loads the PCNA sliding clamp onto DNA. The sequence is that of Replication factor C small subunit from Sulfurisphaera tokodaii (strain DSM 16993 / JCM 10545 / NBRC 100140 / 7) (Sulfolobus tokodaii).